The primary structure comprises 101 residues: Protein S100-A7 (101 aa).

The residue at position 2 (Ser-2) is an N-acetylserine. EF-hand domains follow at residues 13–48 (MIDMFHKYTRRDDKIEKPSLLTMMKENFPNFLSACD) and 50–85 (KGTNYLADVFEKKDKNEDKKIDFSEFLSLLGDIATD). Residues His-18 and Asp-25 each coordinate Zn(2+). Cys-47 and Cys-96 are oxidised to a cystine. Ca(2+) contacts are provided by Asp-63, Asn-65, Asp-67, Lys-69, and Glu-74. Residues His-87 and His-91 each contribute to the Zn(2+) site.

As to quaternary structure, interacts with RANBP9. Fetal ear, skin, and tongue and human cell lines. Highly up-regulated in psoriatic epidermis. Also highly expressed in the urine of bladder squamous cell carcinoma (SCC) bearing patients.

Its subcellular location is the cytoplasm. The protein resides in the secreted. The protein is Protein S100-A7 (S100A7) of Homo sapiens (Human).